Here is a 122-residue protein sequence, read N- to C-terminus: Large ribosomal subunit protein uL14 (122 aa).

Belongs to the universal ribosomal protein uL14 family. Part of the 50S ribosomal subunit. Forms a cluster with proteins L3 and L19. In the 70S ribosome, L14 and L19 interact and together make contacts with the 16S rRNA in bridges B5 and B8.

In terms of biological role, binds to 23S rRNA. Forms part of two intersubunit bridges in the 70S ribosome. In Maridesulfovibrio salexigens (strain ATCC 14822 / DSM 2638 / NCIMB 8403 / VKM B-1763) (Desulfovibrio salexigens), this protein is Large ribosomal subunit protein uL14.